Here is a 524-residue protein sequence, read N- to C-terminus: 2-isopropylmalate synthase (524 aa).

The 263-residue stretch at 12-274 (VIIFDTTLRD…WNRIESKMLT (263 aa)) folds into the Pyruvate carboxyltransferase domain. Aspartate 21, histidine 209, histidine 211, and asparagine 245 together coordinate Mn(2+). The interval 398–524 (RLKSLTVIAG…QDAPAVAVAG (127 aa)) is regulatory domain.

Belongs to the alpha-IPM synthase/homocitrate synthase family. LeuA type 1 subfamily. As to quaternary structure, homodimer. Mn(2+) serves as cofactor.

The protein resides in the cytoplasm. It carries out the reaction 3-methyl-2-oxobutanoate + acetyl-CoA + H2O = (2S)-2-isopropylmalate + CoA + H(+). It participates in amino-acid biosynthesis; L-leucine biosynthesis; L-leucine from 3-methyl-2-oxobutanoate: step 1/4. In terms of biological role, catalyzes the condensation of the acetyl group of acetyl-CoA with 3-methyl-2-oxobutanoate (2-ketoisovalerate) to form 3-carboxy-3-hydroxy-4-methylpentanoate (2-isopropylmalate). In Rhodopseudomonas palustris (strain BisB5), this protein is 2-isopropylmalate synthase.